Consider the following 314-residue polypeptide: Acetaldehyde dehydrogenase 1 (314 aa).

11–14 (SGNI) lines the NAD(+) pocket. Cysteine 129 (acyl-thioester intermediate) is an active-site residue. Residues 160–168 (SAGPGTRAN) and asparagine 292 each bind NAD(+).

It belongs to the acetaldehyde dehydrogenase family.

It catalyses the reaction acetaldehyde + NAD(+) + CoA = acetyl-CoA + NADH + H(+). The chain is Acetaldehyde dehydrogenase 1 from Nocardioides sp. (strain ATCC BAA-499 / JS614).